The chain runs to 653 residues: Rab proteins geranylgeranyltransferase component A 1 (653 aa).

The interval 606–653 (PPPPNPEDIILDGDSLQPEASESSAIPEANSETFKESTNLGNLEESSE) is disordered. Residues 623–646 (PEASESSAIPEANSETFKESTNLG) show a composition bias toward polar residues.

Belongs to the Rab GDI family. As to quaternary structure, monomer. Heterotrimer composed of RABGGTA, RABGGTB and CHM; within this trimer, RABGGTA and RABGGTB form the catalytic component B, while CHM (component A) mediates Rab protein binding. Can associate with the Rab GGTase dimer (RGGT or component B) prior to Rab protein binding; the association is stabilized by geranylgeranyl pyrophosphate (GGpp). The CHM:RGGT:Rab complex is destabilized by GGpp. Interacts with RAB1A, RAB1B, RAB5A, RAB7A and RAB27A and mediates their prenylation. Interacts with the non-phosphorylated forms of RAB3A, RAB3B, RAB3C, RAB3D, RAB5B, RAB5C, RAB8A, RAB8B, RAB10, RAB12, RAB35, and RAB43.

The protein resides in the cytoplasm. It localises to the cytosol. Its function is as follows. Substrate-binding subunit of the Rab geranylgeranyltransferase (GGTase) complex. Binds unprenylated Rab proteins and presents the substrate peptide to the catalytic component B composed of RABGGTA and RABGGTB, and remains bound to it after the geranylgeranyl transfer reaction. The component A is thought to be regenerated by transferring its prenylated Rab back to the donor membrane. Besides, a pre-formed complex consisting of CHM and the Rab GGTase dimer (RGGT or component B) can bind to and prenylate Rab proteins; this alternative pathway is proposed to be the predominant pathway for Rab protein geranylgeranylation. In Homo sapiens (Human), this protein is Rab proteins geranylgeranyltransferase component A 1 (CHM).